A 251-amino-acid chain; its full sequence is uncharacterized protein (251 aa).

This is an uncharacterized protein from Caenorhabditis elegans.